We begin with the raw amino-acid sequence, 685 residues long: Probable transketolase (685 aa).

H32 serves as a coordination point for substrate. Thiamine diphosphate contacts are provided by residues H72 and 121 to 123 (GPL). D162 is a Mg(2+) binding site. The thiamine diphosphate site is built by G163 and N192. Residues N192 and I194 each coordinate Mg(2+). Substrate-binding residues include H268, R363, and S390. H268 lines the thiamine diphosphate pocket. 2 residues coordinate thiamine diphosphate: E422 and F448. The Proton donor role is filled by E422. Positions 472, 480, and 531 each coordinate substrate.

It belongs to the transketolase family. As to quaternary structure, homodimer. Mg(2+) is required as a cofactor. It depends on Ca(2+) as a cofactor. Requires Mn(2+) as cofactor. The cofactor is Co(2+). Thiamine diphosphate serves as cofactor.

It carries out the reaction D-sedoheptulose 7-phosphate + D-glyceraldehyde 3-phosphate = aldehydo-D-ribose 5-phosphate + D-xylulose 5-phosphate. Functionally, catalyzes the transfer of a two-carbon ketol group from a ketose donor to an aldose acceptor, via a covalent intermediate with the cofactor thiamine pyrophosphate. The chain is Probable transketolase from Schizosaccharomyces pombe (strain 972 / ATCC 24843) (Fission yeast).